Consider the following 293-residue polypeptide: MNQLKTASLLGLLSALLIGSSYALLGGSGGMVMGIGLAALTNLGAWYYSDQIALSAYQAQLVRPNQAPHLYAVVQRLAQRANLPMPRLYIIPSSAANAFATGRDPDHAAIAVTEGLLRMLPAAELEGVLAHELAHIQNRDTLTQAVAATLAGAIAFLAQMVSYSFWFFGSRGNDRESNPIGALLMIVLAPLSATILQLGISRTREFSADETAARLTGQPRALAQALSRLESNAQRNALGGNPAFAPLLIINPPVRQWLSNLFTTHPSTQDRINRLLKLEQQLQRRPSIAFTSL.

Transmembrane regions (helical) follow at residues 7–26 (ASLL…ALLG) and 30–49 (GMVM…WYYS). His131 is a binding site for Zn(2+). Glu132 is a catalytic residue. His135 lines the Zn(2+) pocket. 2 consecutive transmembrane segments (helical) span residues 148–168 (ATLA…FWFF) and 180–200 (IGAL…QLGI). Glu205 lines the Zn(2+) pocket.

The protein belongs to the peptidase M48B family. It depends on Zn(2+) as a cofactor.

It is found in the cell inner membrane. The sequence is that of Protease HtpX homolog from Acaryochloris marina (strain MBIC 11017).